We begin with the raw amino-acid sequence, 175 residues long: Cuticle protein 16.5, isoform B (175 aa).

19 tandem repeats follow at residues 17 to 20, 25 to 28, 31 to 34, 38 to 41, 44 to 47, 51 to 54, 57 to 60, 64 to 67, 70 to 73, 77 to 80, 83 to 86, 91 to 94, 99 to 102, 106 to 109, 134 to 137, 144 to 147, 151 to 154, 158 to 161, and 165 to 168.

Component of the cuticle of migratory locust which contains more than 100 different structural proteins. This is Cuticle protein 16.5, isoform B from Locusta migratoria (Migratory locust).